Here is a 449-residue protein sequence, read N- to C-terminus: tRNA (guanine(37)-N(1))-methyltransferase (449 aa).

Residues His216, 254–255 (DL), 282–283 (DG), and Asn345 contribute to the S-adenosyl-L-methionine site.

The protein belongs to the class I-like SAM-binding methyltransferase superfamily. TRM5/TYW2 family. As to quaternary structure, monomer.

It localises to the mitochondrion matrix. The protein resides in the nucleus. It is found in the cytoplasm. It carries out the reaction guanosine(37) in tRNA + S-adenosyl-L-methionine = N(1)-methylguanosine(37) in tRNA + S-adenosyl-L-homocysteine + H(+). Specifically methylates the N1 position of guanosine-37 in various cytoplasmic and mitochondrial tRNAs. Methylation is not dependent on the nature of the nucleoside 5' of the target nucleoside. This is the first step in the biosynthesis of wybutosine (yW), a modified base adjacent to the anticodon of tRNAs and required for accurate decoding. This chain is tRNA (guanine(37)-N(1))-methyltransferase, found in Candida albicans (strain WO-1) (Yeast).